We begin with the raw amino-acid sequence, 249 residues long: ATP-dependent Clp protease proteolytic subunit (249 aa).

S107 serves as the catalytic Nucleophile. Residue H132 is part of the active site. Positions 212-249 (ESASQDNSLDPDAPDESASQDNSLDPDAPDETRPPKLR) are disordered.

The protein belongs to the peptidase S14 family. As to quaternary structure, component of the chloroplastic Clp protease core complex.

The protein localises to the plastid. It localises to the chloroplast stroma. The catalysed reaction is Hydrolysis of proteins to small peptides in the presence of ATP and magnesium. alpha-casein is the usual test substrate. In the absence of ATP, only oligopeptides shorter than five residues are hydrolyzed (such as succinyl-Leu-Tyr-|-NHMec, and Leu-Tyr-Leu-|-Tyr-Trp, in which cleavage of the -Tyr-|-Leu- and -Tyr-|-Trp bonds also occurs).. Functionally, cleaves peptides in various proteins in a process that requires ATP hydrolysis. Has a chymotrypsin-like activity. Plays a major role in the degradation of misfolded proteins. This Oenothera elata subsp. hookeri (Hooker's evening primrose) protein is ATP-dependent Clp protease proteolytic subunit.